The following is a 263-amino-acid chain: Imidazole glycerol phosphate synthase subunit HisF (263 aa).

Catalysis depends on residues Asp22 and Asp141.

Belongs to the HisA/HisF family. As to quaternary structure, heterodimer of HisH and HisF.

Its subcellular location is the cytoplasm. It carries out the reaction 5-[(5-phospho-1-deoxy-D-ribulos-1-ylimino)methylamino]-1-(5-phospho-beta-D-ribosyl)imidazole-4-carboxamide + L-glutamine = D-erythro-1-(imidazol-4-yl)glycerol 3-phosphate + 5-amino-1-(5-phospho-beta-D-ribosyl)imidazole-4-carboxamide + L-glutamate + H(+). It participates in amino-acid biosynthesis; L-histidine biosynthesis; L-histidine from 5-phospho-alpha-D-ribose 1-diphosphate: step 5/9. IGPS catalyzes the conversion of PRFAR and glutamine to IGP, AICAR and glutamate. The HisF subunit catalyzes the cyclization activity that produces IGP and AICAR from PRFAR using the ammonia provided by the HisH subunit. The protein is Imidazole glycerol phosphate synthase subunit HisF of Clavibacter michiganensis subsp. michiganensis (strain NCPPB 382).